Consider the following 172-residue polypeptide: Large ribosomal subunit protein uL16 (172 aa).

This sequence belongs to the universal ribosomal protein uL16 family.

This chain is Large ribosomal subunit protein uL16, found in Methanocella arvoryzae (strain DSM 22066 / NBRC 105507 / MRE50).